The sequence spans 287 residues: ATP synthase gamma chain (287 aa).

The protein belongs to the ATPase gamma chain family. In terms of assembly, F-type ATPases have 2 components, CF(1) - the catalytic core - and CF(0) - the membrane proton channel. CF(1) has five subunits: alpha(3), beta(3), gamma(1), delta(1), epsilon(1). CF(0) has three main subunits: a, b and c.

It localises to the cell inner membrane. Functionally, produces ATP from ADP in the presence of a proton gradient across the membrane. The gamma chain is believed to be important in regulating ATPase activity and the flow of protons through the CF(0) complex. This chain is ATP synthase gamma chain, found in Xylella fastidiosa (strain 9a5c).